A 201-amino-acid polypeptide reads, in one-letter code: 3-isopropylmalate dehydratase small subunit (201 aa).

This sequence belongs to the LeuD family. LeuD type 1 subfamily. In terms of assembly, heterodimer of LeuC and LeuD.

It carries out the reaction (2R,3S)-3-isopropylmalate = (2S)-2-isopropylmalate. It participates in amino-acid biosynthesis; L-leucine biosynthesis; L-leucine from 3-methyl-2-oxobutanoate: step 2/4. Its function is as follows. Catalyzes the isomerization between 2-isopropylmalate and 3-isopropylmalate, via the formation of 2-isopropylmaleate. The polypeptide is 3-isopropylmalate dehydratase small subunit (Cronobacter sakazakii (strain ATCC BAA-894) (Enterobacter sakazakii)).